A 384-amino-acid polypeptide reads, in one-letter code: 8-amino-7-oxononanoate synthase (384 aa).

Arg21 is a substrate binding site. 108–109 is a binding site for pyridoxal 5'-phosphate; sequence GF. His133 provides a ligand contact to substrate. The pyridoxal 5'-phosphate site is built by Ser179, His207, and Thr233. Lys236 carries the post-translational modification N6-(pyridoxal phosphate)lysine. Thr352 serves as a coordination point for substrate.

The protein belongs to the class-II pyridoxal-phosphate-dependent aminotransferase family. BioF subfamily. In terms of assembly, homodimer. It depends on pyridoxal 5'-phosphate as a cofactor.

It carries out the reaction 6-carboxyhexanoyl-[ACP] + L-alanine + H(+) = (8S)-8-amino-7-oxononanoate + holo-[ACP] + CO2. Its pathway is cofactor biosynthesis; biotin biosynthesis. Its function is as follows. Catalyzes the decarboxylative condensation of pimeloyl-[acyl-carrier protein] and L-alanine to produce 8-amino-7-oxononanoate (AON), [acyl-carrier protein], and carbon dioxide. This chain is 8-amino-7-oxononanoate synthase, found in Enterobacter sp. (strain 638).